We begin with the raw amino-acid sequence, 412 residues long: Putative competence-damage inducible protein (412 aa).

It belongs to the CinA family.

This Bacillus cytotoxicus (strain DSM 22905 / CIP 110041 / 391-98 / NVH 391-98) protein is Putative competence-damage inducible protein.